The primary structure comprises 465 residues: VGFKAGVKDYKLTYYTPNYETKDTDILAAFRVSPQPGVPPEEAGAAVAAESSTGTWTTVWTDGLTSLDRYKGRCYHIEPVAGEENQFIAYVAYPLDLFEEGSVTNMFTSIVGNVFGFKALRALRLEDLRIPPAYVKTFQGPPHGIQVERDKLNKYGRPLLGCTIKPKLGLSAKNYGRAVYECLRGGLDFTKDDENVNSQPFMRWRDRLLFCAEAIYKAQAETGEIKGHYLNATAGTCEEMMKRAVFARELGVPIVMHDYLTGGFTANTTLAHYCRDNGLLLHIHRAMHAVIDRQKNHGIHFRVLAKALRMSGGDHIHAGTVVGKLEGERDITLGFVDLLRDDFIEKDRSRGIYFTQDWVSLPGVIPVASGGIHVWHMPALTEIFGDDSVLQFGGGTLGHPWGNAPGAVANRVALEACVQARNEGRDLAREGNEIIREASKWSPELAAACEVWKEIKFEFPAMDTL.

Lys4 is subject to N6,N6,N6-trimethyllysine. Asn113 and Thr163 together coordinate substrate. Lys165 (proton acceptor) is an active-site residue. Lys167 lines the substrate pocket. Mg(2+) contacts are provided by Lys191, Asp193, and Glu194. N6-carboxylysine is present on Lys191. Catalysis depends on His284, which acts as the Proton acceptor. The substrate site is built by Arg285, His317, and Ser369.

The protein belongs to the RuBisCO large chain family. Type I subfamily. In terms of assembly, heterohexadecamer of 8 large chains and 8 small chains; disulfide-linked. The disulfide link is formed within the large subunit homodimers. Mg(2+) is required as a cofactor. The disulfide bond which can form in the large chain dimeric partners within the hexadecamer appears to be associated with oxidative stress and protein turnover.

The protein localises to the plastid. The protein resides in the chloroplast. The enzyme catalyses 2 (2R)-3-phosphoglycerate + 2 H(+) = D-ribulose 1,5-bisphosphate + CO2 + H2O. It carries out the reaction D-ribulose 1,5-bisphosphate + O2 = 2-phosphoglycolate + (2R)-3-phosphoglycerate + 2 H(+). In terms of biological role, ruBisCO catalyzes two reactions: the carboxylation of D-ribulose 1,5-bisphosphate, the primary event in carbon dioxide fixation, as well as the oxidative fragmentation of the pentose substrate in the photorespiration process. Both reactions occur simultaneously and in competition at the same active site. This Bauera rubioides (Dog rose) protein is Ribulose bisphosphate carboxylase large chain.